A 576-amino-acid chain; its full sequence is 2-succinyl-5-enolpyruvyl-6-hydroxy-3-cyclohexene-1-carboxylate synthase (576 aa).

The protein belongs to the TPP enzyme family. MenD subfamily. Homodimer. Mg(2+) is required as a cofactor. It depends on Mn(2+) as a cofactor. The cofactor is thiamine diphosphate.

It carries out the reaction isochorismate + 2-oxoglutarate + H(+) = 5-enolpyruvoyl-6-hydroxy-2-succinyl-cyclohex-3-ene-1-carboxylate + CO2. It functions in the pathway quinol/quinone metabolism; 1,4-dihydroxy-2-naphthoate biosynthesis; 1,4-dihydroxy-2-naphthoate from chorismate: step 2/7. The protein operates within quinol/quinone metabolism; menaquinone biosynthesis. Its function is as follows. Catalyzes the thiamine diphosphate-dependent decarboxylation of 2-oxoglutarate and the subsequent addition of the resulting succinic semialdehyde-thiamine pyrophosphate anion to isochorismate to yield 2-succinyl-5-enolpyruvyl-6-hydroxy-3-cyclohexene-1-carboxylate (SEPHCHC). The polypeptide is 2-succinyl-5-enolpyruvyl-6-hydroxy-3-cyclohexene-1-carboxylate synthase (Aliivibrio fischeri (strain ATCC 700601 / ES114) (Vibrio fischeri)).